The primary structure comprises 278 residues: Ribosomal protein L11 methyltransferase (278 aa).

Residues threonine 131, glycine 152, aspartate 173, and asparagine 214 each contribute to the S-adenosyl-L-methionine site.

This sequence belongs to the methyltransferase superfamily. PrmA family.

The protein resides in the cytoplasm. It catalyses the reaction L-lysyl-[protein] + 3 S-adenosyl-L-methionine = N(6),N(6),N(6)-trimethyl-L-lysyl-[protein] + 3 S-adenosyl-L-homocysteine + 3 H(+). Methylates ribosomal protein L11. This is Ribosomal protein L11 methyltransferase from Campylobacter lari (strain RM2100 / D67 / ATCC BAA-1060).